Reading from the N-terminus, the 257-residue chain is Reticulon-like protein B4 (257 aa).

Residues 19–42 form a disordered region; sequence IHGHGDSSSLSDSDDDKKSTSSSS. The region spanning 68–257 is the Reticulon domain; sequence PADIFLWRNK…PRGALNKKKD (190 aa). 3 helical membrane-spanning segments follow: residues 78–98, 99–119, and 173–193; these read KVSGGVLGAVTASWVLFELFE, YHLLAFLCHFAIFALAALFLW, and FILVIAGLWVLSIIGSCYNFL.

In terms of assembly, interacts with VirB2.

It is found in the endoplasmic reticulum membrane. Plays a role in the Agrobacterium-mediated plant transformation via its interaction with VirB2, the major component of the T-pilus. This is Reticulon-like protein B4 (RTNLB4) from Arabidopsis thaliana (Mouse-ear cress).